The primary structure comprises 313 residues: Dioxygenase swnH2 (313 aa).

Fe cation contacts are provided by histidine 155, aspartate 157, and histidine 232.

It belongs to the PhyH family. In terms of assembly, homodimer. It depends on Fe cation as a cofactor.

The protein operates within mycotoxin biosynthesis. Functionally, aminotransferase; part of the gene cluster that mediates the biosynthesis of swainsonine (SW), a cytotoxic fungal alkaloid and a potential cancer therapy drug. Swainsonine production occurs via a multibranched pathway and is dispensable for fungal colonization of plants and infection of insect hosts. The first step of swainsonine biosynthesis is the production of the precursor pipecolic acid (PA) via conversion of L-lysine (Lys) to 1-piperideine-6-carboxylate (P6C) by the aminotransferase swnA, the latter being further reduced to PA by the reductase swnR. The PKS-NRPS hybrid synthetase swnK uptakes and condensates PA and malonyl-CoA with and without skipping of the ketoreductase (KR) domain in order to produce 3 intermediates, 1-oxoindolizidine, (1S)-1-hydroxyindolizin, and (1R)-1-hydroxyindolizine; with the transisomer (1S)-1-hydroxyindolizin being predominant. The terminal thioester reductase (TE) domain of swnK is involved in reduction of the thioester bond to release the intermediate aldehydes. The oxidoreductase swnN could contribute to the reduction of 1-oxoindolizidine to (1S)-1-hydroxyindolizin and (1R)-1-hydroxyindolizine, contributing to the major route of SW production. The dioxygenase swnH2 would be responsible for the oxidization of (1R)-1-hydroxyindolizine into (1R,2S)-1,2-dihydroxyindolizine and of (1S)-1-hydroxyindolizin to yield both (1R,2S)-1,2-dihydroxyindolizine and (1S,2S)-1,2-dihydroxyindolizine. The dioxygenase swnH1 then performs the conversion of the 1,2-dihydroxyindolizine epimers to SW. The polypeptide is Dioxygenase swnH2 (Arthroderma benhamiae (strain ATCC MYA-4681 / CBS 112371) (Trichophyton mentagrophytes)).